A 1465-amino-acid chain; its full sequence is Protein clueless (1465 aa).

Residues 1-87 (MALEIDAKNA…SNGHSENGDA (87 aa)) form a disordered region. The span at 30–51 (HNNNNNAPAAGEKNLVNGSSAA) shows a compositional bias: low complexity. Residues 52–61 (TKKKGKKNRN) show a composition bias toward basic residues. Ser-273 carries the phosphoserine modification. Residues 427–669 (RAEDAFSSKL…RTFPPDVNFL (243 aa)) form the Clu domain. Basic and acidic residues predominate over residues 742 to 767 (AEKQEEPNEEQPEKTEEQPAEKEESK). Disordered stretches follow at residues 742-776 (AEKQ…TKSA) and 962-1021 (VSSD…SNSD). The span at 970 to 986 (KQPRNNSGKHNKHKAAK) shows a compositional bias: basic residues. Composition is skewed to low complexity over residues 987 to 1003 (ASKP…ATAA) and 1010 to 1020 (ATTSGATSSNS). TPR repeat units follow at residues 1114–1147 (AYNF…LNNV), 1240–1273 (ALID…NLKY), and 1275–1308 (GNKA…EKET). The segment at 1428–1465 (NNNDNASETEQPKDEASAAGTPTQLTNGSEESTATVSS) is disordered. Polar residues predominate over residues 1447-1465 (GTPTQLTNGSEESTATVSS).

It belongs to the CLU family.

It is found in the cytoplasm. MRNA-binding protein involved in proper cytoplasmic distribution of mitochondria. This chain is Protein clueless, found in Drosophila virilis (Fruit fly).